A 53-amino-acid polypeptide reads, in one-letter code: Small polypeptide DEVIL 7 (53 aa).

Residues 1-16 show a composition bias toward basic and acidic residues; sequence MREKYTKEEAVKNWEK. The tract at residues 1–28 is disordered; sequence MREKYTKEEAVKNWEKKKNKPSSPKGVG. A required for DVL/RTFL small polypeptide activity region spans residues 22–53; it reads SSPKGVGEFLKKKKGRFYIIGKCITMLLCSHK. The chain crosses the membrane as a helical span at residues 30–46; it reads FLKKKKGRFYIIGKCIT.

The protein belongs to the DVL/RTFL small polypeptides family.

The protein localises to the cell membrane. Its function is as follows. Small polypeptide acting as a regulatory molecule which coordinates cellular responses required for differentiation, growth and development, probably by restricting polar cell proliferation in lateral organs and coordinating socket cell recruitment and differentiation at trichome sites. This chain is Small polypeptide DEVIL 7, found in Arabidopsis thaliana (Mouse-ear cress).